Here is a 139-residue protein sequence, read N- to C-terminus: Toxin FitB (139 aa).

Positions 2 to 123 constitute a PINc domain; the sequence is ILLDTNVISE…HSLTVATRDT (122 aa). Residues aspartate 5 and aspartate 104 each coordinate Mg(2+).

The protein belongs to the PINc/VapC protein family. Forms a heterodimer with FitA, 4 FitAB heterodimers form a complex that binds to promoter DNA. The complex is also seen in solution. This protein does not actually contact DNA. It depends on Mg(2+) as a cofactor.

Functionally, toxic component of a type II toxin-antitoxin (TA) system. Plays a role in the speed with which bacteria traverse human epithelial cells; disruption of the locus increases the speed of trafficking about 2-4-fold. FitAB binds to its own promoter better than FitA alone. The expected nuclease activity was not observed for the FitAB complex, perhaps because FitA (the antitoxin) prevents metal binding and thus catalysis by FitB. This is Toxin FitB (fitB) from Neisseria gonorrhoeae (strain ATCC 700825 / FA 1090).